We begin with the raw amino-acid sequence, 392 residues long: Major outer membrane porin (392 aa).

Residues 1-22 form the signal peptide; the sequence is MKKLLKSALLFAAAGSALSLQA.

Belongs to the chlamydial porin (CP) (TC 1.B.2) family. In terms of assembly, part of a disulfide cross-linked outer membrane complex (COMC) composed of the major outer membrane porin (MOMP), the small cysteine-rich protein (OmcA) and the large cysteine-rich periplasmic protein (OmcB).

It is found in the cell outer membrane. In elementary bodies (EBs, the infectious stage, which is able to survive outside the host cell) provides the structural integrity of the outer envelope through disulfide cross-links with the small cysteine-rich protein and the large cysteine-rich periplasmic protein. It has been described in publications as the Sarkosyl-insoluble COMC (Chlamydia outer membrane complex), and serves as the functional equivalent of peptidoglycan. Functionally, permits diffusion of specific solutes through the outer membrane. The protein is Major outer membrane porin (ompA) of Chlamydia psittaci (Chlamydophila psittaci).